Consider the following 64-residue polypeptide: uncharacterized protein (64 aa).

Positions 1–64 are disordered; sequence MMITRGWEGW…LDPAISRSSS (64 aa). Gly residues predominate over residues 16–28; it reads RGAGTGTGLGGPG.

This is an uncharacterized protein from Homo sapiens (Human).